The primary structure comprises 388 residues: Succinate--CoA ligase [ADP-forming] subunit beta (388 aa).

An ATP-grasp domain is found at 9–245 (KELLASYGLP…KSQENERELK (237 aa)). ATP contacts are provided by residues K46, 53 to 55 (GRG), E100, Y103, and E108. 2 residues coordinate Mg(2+): N200 and D214. Substrate-binding positions include N265 and 322 to 324 (GIV).

The protein belongs to the succinate/malate CoA ligase beta subunit family. Heterotetramer of two alpha and two beta subunits. Mg(2+) serves as cofactor.

The enzyme catalyses succinate + ATP + CoA = succinyl-CoA + ADP + phosphate. It carries out the reaction GTP + succinate + CoA = succinyl-CoA + GDP + phosphate. The protein operates within carbohydrate metabolism; tricarboxylic acid cycle; succinate from succinyl-CoA (ligase route): step 1/1. Succinyl-CoA synthetase functions in the citric acid cycle (TCA), coupling the hydrolysis of succinyl-CoA to the synthesis of either ATP or GTP and thus represents the only step of substrate-level phosphorylation in the TCA. The beta subunit provides nucleotide specificity of the enzyme and binds the substrate succinate, while the binding sites for coenzyme A and phosphate are found in the alpha subunit. This is Succinate--CoA ligase [ADP-forming] subunit beta from Neisseria meningitidis serogroup A / serotype 4A (strain DSM 15465 / Z2491).